Reading from the N-terminus, the 378-residue chain is WAQVVSQENLPNTMTMLPFTPNSESPSTSEALSTYSSIATVPVTEDPKESISPWGQTTAPASSIPLGTPELSSFFFTSAGASGNTPVPELTTSQEVSTEASLVLFPKSSGVASDPPVTITNPATSSAVASTSLETFKGTSAPPVTVTSSTMTSGPFVATTVSSETSGPPVTMATGSLGPSKETHGLSATIATSSGESSSVAGGTPVFSTKISTTSTPNPITTVPPRPGSSGMLLVSMLIALTVVLVLVALLLLWRQRQKRRTGALTLSRGGKRNGTVDAWAGPARVPDEEATTASGSGGNKSSGAPETDGSGQRPTLTTFFSRRKSRQGSVALEELKPGTGPNLKGEEEPLVGSEDEAVETPTSDGPQAKDGAAPQSL.

The N-terminal stretch at 1-7 (WAQVVSQ) is a signal peptide. At 8–231 (ENLPNTMTML…TVPPRPGSSG (224 aa)) the chain is on the extracellular side. Threonine 13, threonine 15, and threonine 20 each carry an O-linked (GalNAc...) threonine glycan. The interval 13–33 (TMTMLPFTPNSESPSTSEALS) is disordered. 3 O-linked (GalNAc...) serine glycosylation sites follow: serine 23, serine 25, and serine 27. O-linked (GalNAc...) threonine glycosylation is present at threonine 28. O-linked (GalNAc...) serine glycosylation is found at serine 29 and serine 33. An O-linked (GalNAc...) threonine glycan is attached at threonine 34. Residues serine 36 and serine 37 are each glycosylated (O-linked (GalNAc...) serine). An O-linked (GalNAc...) threonine glycan is attached at threonine 40. O-linked (GalNAc...) serine glycans are attached at residues serine 108 and serine 113. O-linked (GalNAc...) threonine glycosylation is found at threonine 118, threonine 120, and threonine 124. O-linked (GalNAc...) serine glycosylation is found at serine 125 and serine 126. An O-linked (GalNAc...) threonine glycan is attached at threonine 174. O-linked (GalNAc...) serine glycans are attached at residues serine 176 and serine 180. O-linked (GalNAc...) threonine glycosylation occurs at threonine 183. O-linked (GalNAc...) serine glycosylation occurs at serine 187. The O-linked (GalNAc...) threonine glycan is linked to threonine 189. Residues 232–254 (MLLVSMLIALTVVLVLVALLLLW) form a helical membrane-spanning segment. A required for interaction with EZR, MSN and RDX and for co-localization to microvilli region spans residues 255 to 285 (RQRQKRRTGALTLSRGGKRNGTVDAWAGPAR). Residues 255-378 (RQRQKRRTGA…AKDGAAPQSL (124 aa)) are Cytoplasmic-facing. The short motif at 259 to 273 (KRRTGALTLSRGGKR) is the Nuclear localization signal element. The tract at residues 265 to 378 (LTLSRGGKRN…AKDGAAPQSL (114 aa)) is disordered. Serine 268 bears the Phosphoserine mark. At threonine 276 the chain carries Phosphothreonine. The segment covering 310-321 (GSGQRPTLTTFF) has biased composition (polar residues). Serine 311 carries the post-translational modification Phosphoserine. Threonine 316 carries the post-translational modification Phosphothreonine. A phosphoserine mark is found at serine 322 and serine 326. A Phosphoserine; by PKC/PRKCQ modification is found at serine 330. At serine 354 the chain carries Phosphoserine. Threonine 361 is subject to Phosphothreonine.

As to quaternary structure, interacts with SIGLEC1. Monomer. Interacts with CTNNB1. Interacts with EZR, MSN and RDX (via FERM domain). Has a high content of sialic acid and O-linked carbohydrate structures. Post-translationally, phosphorylation at Ser-330 is regulated by chemokines, requires its association with ERM proteins (EZR, RDX and MSN) and is essential for its function in the regulation of T-cell trafficking to lymph nodes. In terms of processing, cleavage by CTSG releases its extracellular domain and triggers its intramembrane proteolysis by gamma-secretase releasing the CD43 cytoplasmic tail chain (CD43-ct) which translocates to the nucleus. Sumoylated. As to expression, cell surface of thymocytes, T-lymphocytes, neutrophils, plasma cells and myelomas.

It localises to the membrane. It is found in the cell projection. The protein resides in the microvillus. The protein localises to the uropodium. Its subcellular location is the nucleus. It localises to the PML body. In terms of biological role, predominant cell surface sialoprotein of leukocytes which regulates multiple T-cell functions, including T-cell activation, proliferation, differentiation, trafficking and migration. Positively regulates T-cell trafficking to lymph-nodes via its association with ERM proteins (EZR, RDX and MSN). Negatively regulates Th2 cell differentiation and predisposes the differentiation of T-cells towards a Th1 lineage commitment. Promotes the expression of IFN-gamma by T-cells during T-cell receptor (TCR) activation of naive cells and induces the expression of IFN-gamma by CD4(+) T-cells and to a lesser extent by CD8(+) T-cells. Plays a role in preparing T-cells for cytokine sensing and differentiation into effector cells by inducing the expression of cytokine receptors IFNGR and IL4R, promoting IFNGR and IL4R signaling and by mediating the clustering of IFNGR with TCR. Acts as a major E-selectin ligand responsible for Th17 cell rolling on activated vasculature and recruitment during inflammation. Mediates Th17 cells, but not Th1 cells, adhesion to E-selectin. Acts as a T-cell counter-receptor for SIGLEC1. Protects cells from apoptotic signals, promoting cell survival. This chain is Leukosialin (Spn), found in Rattus norvegicus (Rat).